Consider the following 385-residue polypeptide: MSLMSSVRPSLSIGIEEEYQTVDPVTRDLRSHIHAEIVQKGKLLLAERVKPEMHQSVVEIGTGVCQNIQEAKDEIRDIRQQIIRLARQNDLRLAAGGTHPFAQWREQEIYPDDRYRTIVEDLKMVARANLIFGLHVHIGVEDRETAIQLMNSARYFLPHLLALSANSPFWVGMETGLRSYRCKVFDKFPRTNIPDLYQSWSEFENYVNLLIHTNCIDNAKKIWWDIRPHPYFPTLEFRICDMPMRLEETIAIAALCQAIIAKLYRIHEQNLTFRHYSRSLIMENKWRAARYGLDGKMIDFGKQTEVPARQLIEEILEFVSDVVPELGSREEIAYIRRIMEHGNGADRQLRVFHETGDLKKVVDYMIEETEYGLFAPAFTAAGEGQ.

It belongs to the glutamate--cysteine ligase type 2 family. YbdK subfamily.

The catalysed reaction is L-cysteine + L-glutamate + ATP = gamma-L-glutamyl-L-cysteine + ADP + phosphate + H(+). In terms of biological role, ATP-dependent carboxylate-amine ligase which exhibits weak glutamate--cysteine ligase activity. This Solibacter usitatus (strain Ellin6076) protein is Putative glutamate--cysteine ligase 2.